We begin with the raw amino-acid sequence, 256 residues long: Imidazole glycerol phosphate synthase subunit HisF (256 aa).

Active-site residues include aspartate 11 and aspartate 130.

It belongs to the HisA/HisF family. As to quaternary structure, heterodimer of HisH and HisF.

The protein localises to the cytoplasm. The catalysed reaction is 5-[(5-phospho-1-deoxy-D-ribulos-1-ylimino)methylamino]-1-(5-phospho-beta-D-ribosyl)imidazole-4-carboxamide + L-glutamine = D-erythro-1-(imidazol-4-yl)glycerol 3-phosphate + 5-amino-1-(5-phospho-beta-D-ribosyl)imidazole-4-carboxamide + L-glutamate + H(+). It functions in the pathway amino-acid biosynthesis; L-histidine biosynthesis; L-histidine from 5-phospho-alpha-D-ribose 1-diphosphate: step 5/9. In terms of biological role, IGPS catalyzes the conversion of PRFAR and glutamine to IGP, AICAR and glutamate. The HisF subunit catalyzes the cyclization activity that produces IGP and AICAR from PRFAR using the ammonia provided by the HisH subunit. The sequence is that of Imidazole glycerol phosphate synthase subunit HisF from Cupriavidus metallidurans (strain ATCC 43123 / DSM 2839 / NBRC 102507 / CH34) (Ralstonia metallidurans).